The chain runs to 99 residues: Accessory protein p12I (99 aa).

A helical membrane pass occupies residues 3–23; sequence FRLLSPLSPLALTALLLFLLP. 2 consecutive short sequence motifs (SH3-binding) follow at residues 4-11 and 33-38; these read RLLSPLSP and RPPPAP. Residues 48 to 68 form a helical membrane-spanning segment; that stretch reads ILSGLLFLLFLPLFFSLPLLL. 2 consecutive short sequence motifs (SH3-binding) follow at residues 70–77 and 88–93; these read PSLPITMR and KAPSQP. Lys-88 is covalently cross-linked (Glycyl lysine isopeptide (Lys-Gly) (interchain with G-Cter in ubiquitin); in isolate LAF).

This sequence belongs to the HTLV-1 accessory protein p12I family. As to quaternary structure, p12I is a homodimer. Interacts with human CANX, CALR, ATP6V0C, IL2RB, IL2RG. Binds to MHC-I heavy chains HLA-A2, HLA-B7 and HLA-Cw4. In terms of processing, ubiquitinated; a fraction of P12I is degraded via the ubiquitin system.

It localises to the host endoplasmic reticulum membrane. Its subcellular location is the host Golgi apparatus. The protein resides in the host cis-Golgi network membrane. In terms of biological role, p12I is a modulator of T-lymphocyte proliferation and immune function and may contribute to establish a persistent infection. Binds and down-modulates cell surface expression of interleukin-2 receptors IL2RB and IL2RG. Also down-modulates cell surface MHC-I molecules by binding to free immature MHC-I heavy chains in the ER and targeting them to the proteasome for degradation. Binding to IL2RB mediates recruitment of JAK1 and JAK3. As a result of this interaction, p12I increases DNA-binding and transcriptional activity of STAT5. In Homo sapiens (Human), this protein is Accessory protein p12I.